We begin with the raw amino-acid sequence, 729 residues long: Neurochondrin (729 aa).

Residue Ser-2 is modified to N-acetylserine. A Phosphoserine modification is found at Ser-2. At Ser-2 the chain carries N-acetylalanine. S-palmitoyl cysteine attachment occurs at residues Cys-3 and Cys-4. Residue Arg-75 is modified to Asymmetric dimethylarginine. Ser-448 carries the post-translational modification Phosphoserine.

This sequence belongs to the neurochondrin family. In terms of assembly, interacts with MCHR1. Interacts with SEMA4C. Interacts with DIAPH1 (via FH3 domain). Interacts with GRM5. Palmitoylated. Palmitoylation by ZDHHC1, ZDHHC3 and ZDHHC11 regulates the association of NCDN with endosome membranes. May also be palmitoylated by ZDHHC7. In terms of tissue distribution, abundantly expressed in whole adult brain and in all individual brain regions examined, including spinal cord. Weakly expressed in ovary, testis, fetal brain and small intestine.

The protein localises to the cytoplasm. It localises to the cytosol. It is found in the endosome membrane. Its subcellular location is the cell projection. The protein resides in the dendrite. The protein localises to the postsynapse. In terms of biological role, probably involved in signal transduction in the nervous system, via increasing cell surface localization of GRM5/mGluR5 and positively regulating its signaling. Required for the spatial learning process. Acts as a negative regulator of Ca(2+)-calmodulin-dependent protein kinase 2 (CaMK2) phosphorylation. May play a role in modulating melanin-concentrating hormone-mediated functions via its interaction with MCHR1 that interferes with G protein-coupled signal transduction. May be involved in bone metabolism. May also be involved in neurite outgrowth. This Homo sapiens (Human) protein is Neurochondrin.